The following is a 508-amino-acid chain: Cobyric acid synthase (508 aa).

The region spanning 255-454 is the GATase cobBQ-type domain; it reads ELNIAVLKLP…LHGVFESGPW (200 aa). Catalysis depends on C336, which acts as the Nucleophile. H446 is an active-site residue.

It belongs to the CobB/CobQ family. CobQ subfamily.

It participates in cofactor biosynthesis; adenosylcobalamin biosynthesis. Catalyzes amidations at positions B, D, E, and G on adenosylcobyrinic A,C-diamide. NH(2) groups are provided by glutamine, and one molecule of ATP is hydrogenolyzed for each amidation. In Synechococcus sp. (strain CC9311), this protein is Cobyric acid synthase.